A 273-amino-acid chain; its full sequence is Formamidopyrimidine-DNA glycosylase (273 aa).

P2 functions as the Schiff-base intermediate with DNA in the catalytic mechanism. E3 serves as the catalytic Proton donor. K58 acts as the Proton donor; for beta-elimination activity in catalysis. Positions 91 and 110 each coordinate DNA. Residues 238–272 (QVYGKTGQPCPRCGCLIKKIKVGGRGTHYCPRCQC) form an FPG-type zinc finger. Residue R262 is the Proton donor; for delta-elimination activity of the active site.

Belongs to the FPG family. In terms of assembly, monomer. Zn(2+) serves as cofactor.

It catalyses the reaction Hydrolysis of DNA containing ring-opened 7-methylguanine residues, releasing 2,6-diamino-4-hydroxy-5-(N-methyl)formamidopyrimidine.. The enzyme catalyses 2'-deoxyribonucleotide-(2'-deoxyribose 5'-phosphate)-2'-deoxyribonucleotide-DNA = a 3'-end 2'-deoxyribonucleotide-(2,3-dehydro-2,3-deoxyribose 5'-phosphate)-DNA + a 5'-end 5'-phospho-2'-deoxyribonucleoside-DNA + H(+). Its function is as follows. Involved in base excision repair of DNA damaged by oxidation or by mutagenic agents. Acts as a DNA glycosylase that recognizes and removes damaged bases. Has a preference for oxidized purines, such as 7,8-dihydro-8-oxoguanine (8-oxoG). Has AP (apurinic/apyrimidinic) lyase activity and introduces nicks in the DNA strand. Cleaves the DNA backbone by beta-delta elimination to generate a single-strand break at the site of the removed base with both 3'- and 5'-phosphates. The sequence is that of Formamidopyrimidine-DNA glycosylase from Streptococcus agalactiae serotype Ia (strain ATCC 27591 / A909 / CDC SS700).